We begin with the raw amino-acid sequence, 249 residues long: Proteasome subunit alpha type-7 (249 aa).

This sequence belongs to the peptidase T1A family. The 26S proteasome consists of a 20S proteasome core and two 19S regulatory subunits. The 20S proteasome core is a barrel-shaped complex made of 28 subunits that are arranged in four stacked rings. The two outer rings are each formed by seven alpha subunits, and the two inner rings are formed by seven beta subunits. The proteolytic activity is exerted by three beta-subunits PSMB5, PSMB6 and PSMB7. PSMA7 interacts directly with the PSMG1-PSMG2 heterodimer which promotes 20S proteasome assembly. Interacts with HIF1A. Interacts with RAB7A. Interacts with PRKN. Interacts with ABL1 and ABL2. Interacts with EMAP2. Interacts with MAVS.

Its subcellular location is the cytoplasm. The protein resides in the nucleus. Component of the 20S core proteasome complex involved in the proteolytic degradation of most intracellular proteins. This complex plays numerous essential roles within the cell by associating with different regulatory particles. Associated with two 19S regulatory particles, forms the 26S proteasome and thus participates in the ATP-dependent degradation of ubiquitinated proteins. The 26S proteasome plays a key role in the maintenance of protein homeostasis by removing misfolded or damaged proteins that could impair cellular functions, and by removing proteins whose functions are no longer required. Associated with the PA200 or PA28, the 20S proteasome mediates ubiquitin-independent protein degradation. This type of proteolysis is required in several pathways including spermatogenesis (20S-PA200 complex) or generation of a subset of MHC class I-presented antigenic peptides (20S-PA28 complex). Inhibits the transactivation function of HIF-1A under both normoxic and hypoxia-mimicking conditions. The interaction with EMAP2 increases the proteasome-mediated HIF-1A degradation under the hypoxic conditions. Plays a role in hepatitis C virus internal ribosome entry site-mediated translation. Mediates nuclear translocation of the androgen receptor (AR) and thereby enhances androgen-mediated transactivation. Promotes MAVS degradation and thereby negatively regulates MAVS-mediated innate immune response. The chain is Proteasome subunit alpha type-7 (PSMA7) from Gallus gallus (Chicken).